Consider the following 327-residue polypeptide: DNA-directed RNA polymerase subunit alpha (327 aa).

The tract at residues 1–233 is alpha N-terminal domain (alpha-NTD); the sequence is MQNSASEFLK…DQLSIFADLQ (233 aa). The segment at 247–327 is alpha C-terminal domain (alpha-CTD); the sequence is VDPILLRPVD…NWPPAGLEKP (81 aa).

It belongs to the RNA polymerase alpha chain family. Homodimer. The RNAP catalytic core consists of 2 alpha, 1 beta, 1 beta' and 1 omega subunit. When a sigma factor is associated with the core the holoenzyme is formed, which can initiate transcription.

The catalysed reaction is RNA(n) + a ribonucleoside 5'-triphosphate = RNA(n+1) + diphosphate. In terms of biological role, DNA-dependent RNA polymerase catalyzes the transcription of DNA into RNA using the four ribonucleoside triphosphates as substrates. In Laribacter hongkongensis (strain HLHK9), this protein is DNA-directed RNA polymerase subunit alpha.